The chain runs to 491 residues: Eupatolide synthase (491 aa).

A helical; Signal-anchor for type II membrane protein transmembrane segment spans residues 7–27 (LPSWLLPAVVILTISCILMLW). Cys430 provides a ligand contact to heme.

This sequence belongs to the cytochrome P450 family. It depends on heme as a cofactor. Expressed in leaf primordia.

The protein localises to the membrane. It carries out the reaction 8beta-hydroxygermacra-1(10),4,11(13)-trien-12-oate + reduced [NADPH--hemoprotein reductase] + O2 = eupatolide + oxidized [NADPH--hemoprotein reductase] + 2 H2O. Its pathway is secondary metabolite biosynthesis; terpenoid biosynthesis. Functionally, involved in the biosynthesis of germacrene-derived sesquiterpene lactones. Hydroxylates 8-beta-hydroxy-germacrene A acid to 6-alpha,8-beta-hydroxy-germacrene A acid, which, in turn, undergo spontaneous lactonization to become eupatolide. The protein is Eupatolide synthase of Helianthus annuus (Common sunflower).